The chain runs to 109 residues: Iron-sulfur cluster assembly protein CyaY (109 aa).

The protein belongs to the frataxin family.

Involved in iron-sulfur (Fe-S) cluster assembly. May act as a regulator of Fe-S biogenesis. In Shewanella baltica (strain OS155 / ATCC BAA-1091), this protein is Iron-sulfur cluster assembly protein CyaY.